The sequence spans 558 residues: DEAD-box ATP-dependent RNA helicase 49 (558 aa).

The Q motif motif lies at 16–44; that stretch reads FSELKPPLSEDIIEALDRSGFEVCTPVQA. A Helicase ATP-binding domain is found at 47–226; the sequence is IPFLCSHKDV…KAGLRNAMEV (180 aa). Residue 60–67 participates in ATP binding; sequence AATGSGKT. A DEAD box motif is present at residues 174–177; that stretch reads DEAD. Residues 255–402 form the Helicase C-terminal domain; that stretch reads QLVHLLIENK…ERKCSENASD (148 aa). The tract at residues 506–558 is disordered; sequence KDKLQQEKRGKRKKSSKEAVDDSNKASRKRKLTGRQRQTIQTAQDEEEMNLRL. The span at 521 to 530 shows a compositional bias: basic and acidic residues; it reads SKEAVDDSNK. Residues 549 to 558 are compositionally biased toward acidic residues; that stretch reads QDEEEMNLRL.

The protein belongs to the DEAD box helicase family. DDX55/SPB4 subfamily.

The catalysed reaction is ATP + H2O = ADP + phosphate + H(+). The chain is DEAD-box ATP-dependent RNA helicase 49 (RH49) from Arabidopsis thaliana (Mouse-ear cress).